A 235-amino-acid polypeptide reads, in one-letter code: 2-C-methyl-D-erythritol 4-phosphate cytidylyltransferase (235 aa).

It belongs to the IspD/TarI cytidylyltransferase family. IspD subfamily.

It catalyses the reaction 2-C-methyl-D-erythritol 4-phosphate + CTP + H(+) = 4-CDP-2-C-methyl-D-erythritol + diphosphate. Its pathway is isoprenoid biosynthesis; isopentenyl diphosphate biosynthesis via DXP pathway; isopentenyl diphosphate from 1-deoxy-D-xylulose 5-phosphate: step 2/6. In terms of biological role, catalyzes the formation of 4-diphosphocytidyl-2-C-methyl-D-erythritol from CTP and 2-C-methyl-D-erythritol 4-phosphate (MEP). The polypeptide is 2-C-methyl-D-erythritol 4-phosphate cytidylyltransferase (Pseudomonas fluorescens (strain ATCC BAA-477 / NRRL B-23932 / Pf-5)).